Reading from the N-terminus, the 551-residue chain is Tetrachloroethene reductive dehalogenase (551 aa).

Positions Met1–Ala39 form a signal peptide, tat-type signal. A 4Fe-4S ferredoxin-type 1 domain is found at Pro411 to Asp440. The [4Fe-4S] cluster site is built by Cys420, Cys423, Cys426, Cys430, Cys467, Cys478, Cys481, and Cys485. In terms of domain architecture, 4Fe-4S ferredoxin-type 2 spans Cys478–Asp496.

The protein belongs to the PceA family. It depends on [4Fe-4S] cluster as a cofactor. The cofactor is corrinoid. In terms of processing, predicted to be exported by the Tat system. The position of the signal peptide cleavage has been experimentally proven.

It is found in the cell membrane. It carries out the reaction trichloroethene + chloride + A + H(+) = tetrachloroethene + AH2. The catalysed reaction is trichloroethene + AH2 = (Z)-1,2-dichloroethene + chloride + A + H(+). Catalyzes the reductive dechlorination of tetrachloroethene (PCE) to trichloroethene (TCE) and of trichloroethene to cis-1,2-dichloroethene (DCE). Reduced methyl viologen can act as the artificial electron donor. This is Tetrachloroethene reductive dehalogenase from Desulfitobacterium hafniense (Desulfitobacterium frappieri).